The sequence spans 862 residues: Probable disease resistance protein At5g43740 (862 aa).

Positions 24–61 (RNYIHMMESNLDALQKTMEELKNGRDDLLGRVSIEEDK) form a coiled coil. In terms of domain architecture, NB-ARC spans 135-438 (MVAQEIIHKV…CEGFINPNRY (304 aa)). 178–185 (GMGGVGKT) serves as a coordination point for ATP. LRR repeat units lie at residues 511–532 (IVRT…SKCP), 533–555 (NLST…FFRF), 558–580 (KLVV…ISNL), and 582–604 (SLQY…KKLR).

Belongs to the disease resistance NB-LRR family.

In terms of biological role, probable disease resistance protein. The sequence is that of Probable disease resistance protein At5g43740 from Arabidopsis thaliana (Mouse-ear cress).